Here is a 147-residue protein sequence, read N- to C-terminus: SsrA-binding protein (147 aa).

Belongs to the SmpB family.

The protein resides in the cytoplasm. In terms of biological role, required for rescue of stalled ribosomes mediated by trans-translation. Binds to transfer-messenger RNA (tmRNA), required for stable association of tmRNA with ribosomes. tmRNA and SmpB together mimic tRNA shape, replacing the anticodon stem-loop with SmpB. tmRNA is encoded by the ssrA gene; the 2 termini fold to resemble tRNA(Ala) and it encodes a 'tag peptide', a short internal open reading frame. During trans-translation Ala-aminoacylated tmRNA acts like a tRNA, entering the A-site of stalled ribosomes, displacing the stalled mRNA. The ribosome then switches to translate the ORF on the tmRNA; the nascent peptide is terminated with the 'tag peptide' encoded by the tmRNA and targeted for degradation. The ribosome is freed to recommence translation, which seems to be the essential function of trans-translation. The polypeptide is SsrA-binding protein (Mycoplasmopsis agalactiae (strain NCTC 10123 / CIP 59.7 / PG2) (Mycoplasma agalactiae)).